The following is a 471-amino-acid chain: Mitochondrial distribution and morphology protein 10 (471 aa).

The tract at residues 313-338 (SNSAATPPRIKNSDSQVLSNNSTDSK) is disordered. Positions 325–338 (SDSQVLSNNSTDSK) are enriched in polar residues.

The protein belongs to the MDM10 family. As to quaternary structure, component of the ER-mitochondria encounter structure (ERMES) or MDM complex, composed of MMM1, MDM10, MDM12 and MDM34. Associates with the mitochondrial outer membrane sorting assembly machinery SAM(core) complex.

Its subcellular location is the mitochondrion outer membrane. Functionally, component of the ERMES/MDM complex, which serves as a molecular tether to connect the endoplasmic reticulum and mitochondria. Components of this complex are involved in the control of mitochondrial shape and protein biogenesis and may function in phospholipid exchange. MDM10 is involved in the late assembly steps of the general translocase of the mitochondrial outer membrane (TOM complex). Functions in the TOM40-specific route of the assembly of outer membrane beta-barrel proteins, including the association of TOM40 with the receptor TOM22 and small TOM proteins. Can associate with the SAM(core) complex as well as the MDM12-MMM1 complex, both involved in late steps of the major beta-barrel assembly pathway, that is responsible for biogenesis of all outer membrane beta-barrel proteins. May act as a switch that shuttles between both complexes and channels precursor proteins into the TOM40-specific pathway. Plays a role in mitochondrial morphology and in the inheritance of mitochondria. In Debaryomyces hansenii (strain ATCC 36239 / CBS 767 / BCRC 21394 / JCM 1990 / NBRC 0083 / IGC 2968) (Yeast), this protein is Mitochondrial distribution and morphology protein 10.